We begin with the raw amino-acid sequence, 41 residues long: Large ribosomal subunit protein bL36 (41 aa).

Belongs to the bacterial ribosomal protein bL36 family.

The protein is Large ribosomal subunit protein bL36 of Bradyrhizobium diazoefficiens (strain JCM 10833 / BCRC 13528 / IAM 13628 / NBRC 14792 / USDA 110).